Here is a 728-residue protein sequence, read N- to C-terminus: E3 ubiquitin-protein ligase LNX (728 aa).

Residues 45–83 form an RING-type zinc finger; sequence CHICLQALLDPLDTPCGHTYCTLCLTNFLVEKDFCPVDR. The NPXY motif signature appears at 185–188; the sequence is NPAY. The segment at 185–220 is disordered; the sequence is NPAYVSSVEDGEPVANSSDSGRSNRTRARPFERSTM. The tract at residues 186–244 is interaction with MAGEB18; that stretch reads PAYVSSVEDGEPVANSSDSGRSNRTRARPFERSTMRSRSFKKINRALSALRRTKSGSVV. PDZ domains follow at residues 278 to 362 and 385 to 467; these read SIKI…VLRE and HVIL…VSRQ. Ser-445 is modified (phosphoserine). The interval 481–500 is disordered; sequence WISNGQQSPGPGERNTASKP. 2 consecutive PDZ domains span residues 508–593 and 638–723; these read VVSV…ALEV and DVIL…IASW.

In terms of assembly, interacts with CXADR. Interacts with MAGEB18 and MAGEF1. Interacts with the phosphotyrosine interaction domain of all isoforms of NUMB. IGSF5/JAM4 interacts with isoform 2 through the second PDZ domain, other isoforms may also interact with IGSF5/JAM4. As to expression, isoform 1 and isoform 2 are expressed in the heart. Isoform 1 is also expressed in kidney, lung and skeletal muscle while isoform 2 is also expressed in brain.

Its subcellular location is the cytoplasm. It catalyses the reaction S-ubiquitinyl-[E2 ubiquitin-conjugating enzyme]-L-cysteine + [acceptor protein]-L-lysine = [E2 ubiquitin-conjugating enzyme]-L-cysteine + N(6)-ubiquitinyl-[acceptor protein]-L-lysine.. Its pathway is protein modification; protein ubiquitination. Functionally, E3 ubiquitin-protein ligase that mediates ubiquitination and subsequent proteasomal degradation of NUMB. E3 ubiquitin ligases accept ubiquitin from an E2 ubiquitin-conjugating enzyme in the form of a thioester and then directly transfers the ubiquitin to targeted substrates. Mediates ubiquitination of isoform p66 and isoform p72 of NUMB, but not that of isoform p71 or isoform p65. Its function is as follows. Isoform 2 provides an endocytic scaffold for IGSF5/JAM4. The sequence is that of E3 ubiquitin-protein ligase LNX (Lnx1) from Mus musculus (Mouse).